The following is a 432-amino-acid chain: MKFIDTAKFTIKAGNGGNGAVSFHTALFVPNGGPNGGDGGNGGSVIFEADGGKHSLLDLKLQKQLSAQDGFKGDIKNMHGAQGKDLIVRVPVGTLIIENKTGTILADMDEDKKQVLVAKGGKGGKGNARFANSRNKAPTIFEAGEIGQFYEVKAELKVLADVGFVGLPNAGKSTLLRAISNSKPEVADYAFTTLNPQLGVSRAKDGSTFVVADLPGLIEGASLGKGLGHQFLKHIERCRVICHVLDMSGNYGQEDVIKNYELIRSELVKYNYKLDERPEIIVANKMDTDEAQLNMMEEDIKKYFKDKKVVFVSGLLKDNVDELLLKIAKELETAKYVPLWEMEQDIYEGIKVYRLEEDEEDIQIINKGNGRWEVAGDTIYKIYQKFPITTDDNLLLFNEKLKKSGVYDMLRERGVGAGDIVKVFEYELEWMD.

Residues 1–159 (MKFIDTAKFT…YEVKAELKVL (159 aa)) enclose the Obg domain. Residues 160 to 332 (ADVGFVGLPN…LLLKIAKELE (173 aa)) form the OBG-type G domain. Residues 166–173 (GLPNAGKS), 191–195 (FTTLN), 213–216 (DLPG), 284–287 (NKMD), and 313–315 (SGL) each bind GTP. The Mg(2+) site is built by S173 and T193. The 79-residue stretch at 354–432 (RLEEDEEDIQ…VFEYELEWMD (79 aa)) folds into the OCT domain.

This sequence belongs to the TRAFAC class OBG-HflX-like GTPase superfamily. OBG GTPase family. Monomer. The cofactor is Mg(2+).

It localises to the cytoplasm. Functionally, an essential GTPase which binds GTP, GDP and possibly (p)ppGpp with moderate affinity, with high nucleotide exchange rates and a fairly low GTP hydrolysis rate. Plays a role in control of the cell cycle, stress response, ribosome biogenesis and in those bacteria that undergo differentiation, in morphogenesis control. This chain is GTPase Obg, found in Mesoplasma florum (strain ATCC 33453 / NBRC 100688 / NCTC 11704 / L1) (Acholeplasma florum).